The sequence spans 416 residues: Serine hydroxymethyltransferase (416 aa).

Residues leucine 121 and 125-127 (GHL) each bind (6S)-5,6,7,8-tetrahydrofolate. Residue lysine 229 is modified to N6-(pyridoxal phosphate)lysine. 354-356 (SPF) is a binding site for (6S)-5,6,7,8-tetrahydrofolate.

This sequence belongs to the SHMT family. As to quaternary structure, homodimer. Pyridoxal 5'-phosphate serves as cofactor.

It localises to the cytoplasm. The catalysed reaction is (6R)-5,10-methylene-5,6,7,8-tetrahydrofolate + glycine + H2O = (6S)-5,6,7,8-tetrahydrofolate + L-serine. It participates in one-carbon metabolism; tetrahydrofolate interconversion. The protein operates within amino-acid biosynthesis; glycine biosynthesis; glycine from L-serine: step 1/1. Catalyzes the reversible interconversion of serine and glycine with tetrahydrofolate (THF) serving as the one-carbon carrier. This reaction serves as the major source of one-carbon groups required for the biosynthesis of purines, thymidylate, methionine, and other important biomolecules. Also exhibits THF-independent aldolase activity toward beta-hydroxyamino acids, producing glycine and aldehydes, via a retro-aldol mechanism. The chain is Serine hydroxymethyltransferase from Halorhodospira halophila (strain DSM 244 / SL1) (Ectothiorhodospira halophila (strain DSM 244 / SL1)).